The chain runs to 225 residues: Claudin-17 (225 aa).

Residues 1-7 lie on the Cytoplasmic side of the membrane; sequence MAFYPLQ. A helical transmembrane segment spans residues 8-28; that stretch reads IAGLVLGFLGMVGTLATTLLP. Over 29-81 the chain is Extracellular; sequence QWRVSAFIGSNIIVFERIWEGLWMNCVRQAKARLQCKFYSSMLALSPALEAAR. Residues 82–102 traverse the membrane as a helical segment; that stretch reads ALMCVAVALSLIALIIGICGM. Residues 103–124 lie on the Cytoplasmic side of the membrane; that stretch reads KKIQCTGSNERAKAYLLGTSGV. A helical transmembrane segment spans residues 125–145; that stretch reads LFILTGIFVLIPVCWTANIII. Residues 146-164 lie on the Extracellular side of the membrane; the sequence is RDFYNPAVHVGQKRELGAA. A helical membrane pass occupies residues 165-185; sequence LFLGWASVAVLFIAGGLLCGF. At 186-225 the chain is on the cytoplasmic side; the sequence is CCCNRKKQRDGYPAPRPSMPRTDERRRNMTRQSETPTSYV. Residues 194-225 are disordered; the sequence is RDGYPAPRPSMPRTDERRRNMTRQSETPTSYV. Polar residues predominate over residues 215–225; that stretch reads TRQSETPTSYV.

It belongs to the claudin family. Does not form homotypic polymeric strands and it is not sufficient to form tight junctions by its own. Interacts with OCLN.

Its subcellular location is the cell junction. The protein localises to the tight junction. The protein resides in the cell membrane. It catalyses the reaction chloride(in) = chloride(out). The catalysed reaction is hydrogencarbonate(in) = hydrogencarbonate(out). The enzyme catalyses bromide(in) = bromide(out). It carries out the reaction iodide(out) = iodide(in). It catalyses the reaction fluoride(in) = fluoride(out). The catalysed reaction is nitrate(in) = nitrate(out). The enzyme catalyses thiocyanate(in) = thiocyanate(out). Functionally, channel-forming tight junction protein with selectivity for anions, including chloride and hydrogencarbonate, and for solutes smaller than 9 Angstrom in diameter. In the kidney proximal tubule, may be involved in quantitative reabsorption of filtered anions. Does not affect water permeability. The sequence is that of Claudin-17 (CLDN17) from Sus scrofa (Pig).